Here is a 272-residue protein sequence, read N- to C-terminus: 2-amino-3,7-dideoxy-D-threo-hept-6-ulosonate synthase (272 aa).

Aspartate 33 acts as the Proton acceptor in catalysis. 1-deoxy-D-threo-hexo-2,5-diulose 6-phosphate-binding positions include 33 to 37 and 153 to 155; these read DHGVS and YPR. Tyrosine 153 functions as the Proton donor in the catalytic mechanism. Lysine 184 (schiff-base intermediate with substrate) is an active-site residue. Residues 209-210 and 237-238 each bind 1-deoxy-D-threo-hexo-2,5-diulose 6-phosphate; these read GG and GR.

It belongs to the DeoC/FbaB aldolase family. ADHS subfamily. As to quaternary structure, homodecamer.

The enzyme catalyses 1-deoxy-D-threo-hexo-2,5-diulose 6-phosphate + L-aspartate 4-semialdehyde = 2,3-dioxopropyl phosphate + 2-amino-2,3,7-trideoxy-D-lyxo-hept-6-ulosonate. Its function is as follows. Catalyzes a transaldol reaction between 6-deoxy-5-ketofructose 1-phosphate (DKFP) and L-aspartate semialdehyde (ASA) with an elimination of hydroxypyruvaldehyde phosphate to yield 2-amino-3,7-dideoxy-D-threo-hept-6-ulosonate (ADH). Plays a key role in an alternative pathway of the biosynthesis of 3-dehydroquinate (DHQ), which is involved in the canonical pathway for the biosynthesis of aromatic amino acids. This is 2-amino-3,7-dideoxy-D-threo-hept-6-ulosonate synthase from Methanococcus vannielii (strain ATCC 35089 / DSM 1224 / JCM 13029 / OCM 148 / SB).